A 1238-amino-acid polypeptide reads, in one-letter code: Virulence sensor protein BvgS (1238 aa).

The N-terminal stretch at 1–30 (MPAPHRLYPRSLICLAQALLAWALLAWAPA) is a signal peptide. The Cytoplasmic portion of the chain corresponds to 33–307 (SQELTLVGKA…REQQWMANHP (275 aa)). The chain crosses the membrane as a helical span at residues 308–331 (VVKVAVLNLFAPFTLFRTDEQFGG). Residues 332-541 (ISAAVLQLLQ…PRTWYAYRNE (210 aa)) lie on the Periplasmic side of the membrane. Residues 542–563 (IYLLIGLGLLSALLFLSWIVYL) form a helical membrane-spanning segment. Residues 564-1238 (RRQIRQRKRA…LEQRPHQGQP (675 aa)) are Cytoplasmic-facing. Residues 580 to 651 (QLEFMRVLID…MHEFLLTRMS (72 aa)) enclose the PAS domain. A PAC domain is found at 652–708 (AEREPRFEDRDVTLHGRTRHVYQWTVPYGDSLGELKGIIGGWIDITERAELLRELHD). The region spanning 726-948 (TMSHEIRTPM…TVSVDLRLTM (223 aa)) is the Histidine kinase domain. The residue at position 729 (histidine 729) is a Phosphohistidine; by autocatalysis. In terms of domain architecture, Response regulatory spans 974 to 1095 (RVLVVDDHKP…ALRQRLNEAA (122 aa)). Aspartate 1023 carries the post-translational modification 4-aspartylphosphate. In terms of domain architecture, HPt spans 1133–1228 (DEALIRQLLE…AALETQLRAW (96 aa)). Histidine 1172 is modified (phosphohistidine).

In terms of processing, activation requires a sequential transfer of a phosphate group from a His in the primary transmitter domain, to an Asp in the receiver domain and to a His in the secondary transmitter domain.

It localises to the cell inner membrane. The enzyme catalyses ATP + protein L-histidine = ADP + protein N-phospho-L-histidine.. Functionally, member of the two-component regulatory system BvgS/BvgA. Phosphorylates BvgA via a four-step phosphorelay in response to environmental signals. The polypeptide is Virulence sensor protein BvgS (bvgS) (Bordetella bronchiseptica (strain ATCC BAA-588 / NCTC 13252 / RB50) (Alcaligenes bronchisepticus)).